The following is a 94-amino-acid chain: ESAT-6-like protein EsxL (94 aa).

The protein belongs to the WXG100 family. ESAT-6 subfamily. As to quaternary structure, strongly interacts with EsxK to form a heterodimeric complex under reducing conditions.

The protein localises to the secreted. The sequence is that of ESAT-6-like protein EsxL from Mycobacterium tuberculosis (strain CDC 1551 / Oshkosh).